A 403-amino-acid polypeptide reads, in one-letter code: Argininosuccinate synthase (403 aa).

Residues 10 to 18 (AYSGGVDTS) and alanine 38 contribute to the ATP site. An L-citrulline-binding site is contributed by tyrosine 89. Glycine 119 lines the ATP pocket. Residues threonine 121, asparagine 125, and aspartate 126 each contribute to the L-aspartate site. L-citrulline is bound at residue asparagine 125. 5 residues coordinate L-citrulline: arginine 129, serine 177, serine 186, glutamate 262, and tyrosine 274.

This sequence belongs to the argininosuccinate synthase family. Type 1 subfamily. In terms of assembly, homotetramer.

The protein localises to the cytoplasm. It catalyses the reaction L-citrulline + L-aspartate + ATP = 2-(N(omega)-L-arginino)succinate + AMP + diphosphate + H(+). It functions in the pathway amino-acid biosynthesis; L-arginine biosynthesis; L-arginine from L-ornithine and carbamoyl phosphate: step 2/3. The sequence is that of Argininosuccinate synthase from Parasynechococcus marenigrum (strain WH8102).